We begin with the raw amino-acid sequence, 400 residues long: Nicotinate phosphoribosyltransferase (400 aa).

H220 is modified (phosphohistidine; by autocatalysis).

Belongs to the NAPRTase family. Transiently phosphorylated on a His residue during the reaction cycle. Phosphorylation strongly increases the affinity for substrates and increases the rate of nicotinate D-ribonucleotide production. Dephosphorylation regenerates the low-affinity form of the enzyme, leading to product release.

It carries out the reaction nicotinate + 5-phospho-alpha-D-ribose 1-diphosphate + ATP + H2O = nicotinate beta-D-ribonucleotide + ADP + phosphate + diphosphate. It functions in the pathway cofactor biosynthesis; NAD(+) biosynthesis; nicotinate D-ribonucleotide from nicotinate: step 1/1. In terms of biological role, catalyzes the synthesis of beta-nicotinate D-ribonucleotide from nicotinate and 5-phospho-D-ribose 1-phosphate at the expense of ATP. This is Nicotinate phosphoribosyltransferase from Salmonella schwarzengrund (strain CVM19633).